Reading from the N-terminus, the 399-residue chain is Putative glutamate--cysteine ligase 2 (399 aa).

The tract at residues P377–A399 is disordered.

This sequence belongs to the glutamate--cysteine ligase type 2 family. YbdK subfamily.

The enzyme catalyses L-cysteine + L-glutamate + ATP = gamma-L-glutamyl-L-cysteine + ADP + phosphate + H(+). Functionally, ATP-dependent carboxylate-amine ligase which exhibits weak glutamate--cysteine ligase activity. This chain is Putative glutamate--cysteine ligase 2, found in Thermobifida fusca (strain YX).